A 1147-amino-acid chain; its full sequence is MSTGPGKKAIRNAGGVGGGAGPSAGGPRGPAGQAVKFARRTSSGRYVSLSREDIDMEGELAADYTNYTVQIPPTPDNQPMLNGAEPASVAMKAEEQYVSNSLFTGGFNSATRAHLMDKVIESSVSHPQMAGAKGSRCAMPACDGSAMRNERGEDVDPCECHFKICRDCYLDAQKDGCICPGCKEHYKIGEYADDDPHDGKLHLPGPGGGGNKSLLARNQNGEFDHNRWLFESSGTYGYGNAFWPKGGMYDDDLDDDVDKLGGDGGGGGGGGPLPEQKPFKPLTRKIPMPTSVISPYRIFIVIRMFVLLFYLTWRIRNPNMEALWLWGMSIVCELWFAFSWLLDMLPKVNPVNRSTDLAVLKEKFETPSPSNPHGRSDLPGLDVFVSTADPEKEPVLTTATTILSILAVDYPVEKLACYVSDDGGALLTFEAMAEAASFANVWVPFCKKHDIEPRNPDSYFSVKGDPTKGKRRNDFVKDRRRVKREFDEFKVRINGLPDSIRRRSDAFNAREDMKMLKHLRETGADPSEQPKVKKATWMADGSHWPGTWAASAPDHAKGNHAGILQVMLKPPSPDPLYGMHDDDQMIDFSDVDIRLPMLVYMSREKRPGYDHNKKAGAMNALVRCSAVMSNGPFMLNFDCDHYINNAQAVREAMCFFMDRGGERIAYIQFPQRFEGIDPSDRYANNNTVFFDGNMRALDGLQGPMYVGTGCMFRRFAVYGFDPPRTAEYTGWLFTKKKVTTFKDPESDTQTLKAEDFDAELTSHLVPRRFGNSSPFMASIPVAEFQARPLADHPAVLHGRPSGALTVPRPPLDPPTVAEAVSVISCWYEDKTEWGDRVGWIYGSVTEDVVTGYRMHNRGWRSVYCITKRDAFLGTAPINLTDRLHQVLRWATGSVEIFFSRNNAFLASRKLMLLQRISYLNVGIYPFTSIFLLVYCFIPALSLFSGFFIVQKLDIAFLCYLLTMTITLVALGILEVKWSGIELEDWWRNEQFWLISGTSAHLYAVVQGLLKVMAGIEISFTLTAKAAADDNEDIYADLYIVKWSSLLIPPITIGMVNIIAIAFAFARTIYSDNPRWGKFIGGGFFSFWVLAHLNPFAKGLMGRRGKTPTIVFVWSGLLSITVSLLWVAISPPEANSNGGARGGGFQFP.

2 disordered regions span residues 1–33 (MSTG…PAGQ) and 259–281 (KLGG…PFKP). Composition is skewed to gly residues over residues 14–29 (GGVG…GPRG) and 262–272 (GDGGGGGGGGP). Transmembrane regions (helical) follow at residues 292-312 (VISP…FYLT) and 322-342 (ALWL…SWLL). Catalysis depends on residues Asp-422 and Asp-847. The next 6 helical transmembrane spans lie at 929–949 (IFLL…FFIV), 954–974 (IAFL…GILE), 1001–1021 (LYAV…SFTL), 1045–1065 (LLIP…FAFA), 1075–1095 (WGKF…LNPF), and 1108–1128 (TIVF…WVAI).

Belongs to the glycosyltransferase 2 family. Plant cellulose synthase-like D subfamily.

Its subcellular location is the golgi apparatus membrane. Its function is as follows. Thought to be a Golgi-localized beta-glycan synthase that polymerize the backbones of noncellulosic polysaccharides (hemicelluloses) of plant cell wall. This Oryza sativa subsp. japonica (Rice) protein is Cellulose synthase-like protein D3 (CSLD3).